The following is a 143-amino-acid chain: Large ribosomal subunit protein uL13 (143 aa).

Belongs to the universal ribosomal protein uL13 family. As to quaternary structure, part of the 50S ribosomal subunit.

Its function is as follows. This protein is one of the early assembly proteins of the 50S ribosomal subunit, although it is not seen to bind rRNA by itself. It is important during the early stages of 50S assembly. The chain is Large ribosomal subunit protein uL13 from Carboxydothermus hydrogenoformans (strain ATCC BAA-161 / DSM 6008 / Z-2901).